Here is a 476-residue protein sequence, read N- to C-terminus: Aspartyl/glutamyl-tRNA(Asn/Gln) amidotransferase subunit B (476 aa).

It belongs to the GatB/GatE family. GatB subfamily. In terms of assembly, heterotrimer of A, B and C subunits.

It catalyses the reaction L-glutamyl-tRNA(Gln) + L-glutamine + ATP + H2O = L-glutaminyl-tRNA(Gln) + L-glutamate + ADP + phosphate + H(+). It carries out the reaction L-aspartyl-tRNA(Asn) + L-glutamine + ATP + H2O = L-asparaginyl-tRNA(Asn) + L-glutamate + ADP + phosphate + 2 H(+). Its function is as follows. Allows the formation of correctly charged Asn-tRNA(Asn) or Gln-tRNA(Gln) through the transamidation of misacylated Asp-tRNA(Asn) or Glu-tRNA(Gln) in organisms which lack either or both of asparaginyl-tRNA or glutaminyl-tRNA synthetases. The reaction takes place in the presence of glutamine and ATP through an activated phospho-Asp-tRNA(Asn) or phospho-Glu-tRNA(Gln). The sequence is that of Aspartyl/glutamyl-tRNA(Asn/Gln) amidotransferase subunit B from Clostridium botulinum (strain Alaska E43 / Type E3).